The primary structure comprises 345 residues: Type II restriction enzyme HgiCI (345 aa).

The catalysed reaction is Endonucleolytic cleavage of DNA to give specific double-stranded fragments with terminal 5'-phosphates.. In terms of biological role, a P subtype restriction enzyme that recognizes the double-stranded sequence 5'-GGYRCC-3' and cleaves after G-1. In Herpetosiphon aurantiacus (Herpetosiphon giganteus), this protein is Type II restriction enzyme HgiCI (hgiCIR).